A 426-amino-acid polypeptide reads, in one-letter code: Enolase (426 aa).

Glutamine 163 serves as a coordination point for (2R)-2-phosphoglycerate. Glutamate 205 functions as the Proton donor in the catalytic mechanism. Residues aspartate 242, glutamate 286, and aspartate 313 each coordinate Mg(2+). The (2R)-2-phosphoglycerate site is built by lysine 338, arginine 367, serine 368, and lysine 389. The active-site Proton acceptor is lysine 338.

Belongs to the enolase family. Mg(2+) is required as a cofactor.

The protein resides in the cytoplasm. Its subcellular location is the secreted. It is found in the cell surface. It catalyses the reaction (2R)-2-phosphoglycerate = phosphoenolpyruvate + H2O. Its pathway is carbohydrate degradation; glycolysis; pyruvate from D-glyceraldehyde 3-phosphate: step 4/5. Its function is as follows. Catalyzes the reversible conversion of 2-phosphoglycerate (2-PG) into phosphoenolpyruvate (PEP). It is essential for the degradation of carbohydrates via glycolysis. This Helicobacter pylori (strain ATCC 700392 / 26695) (Campylobacter pylori) protein is Enolase.